A 227-amino-acid polypeptide reads, in one-letter code: Cytochrome c oxidase subunit 2 (227 aa).

Residues 1 to 14 (MAYPMQLGFQDATS) are Mitochondrial intermembrane-facing. A helical membrane pass occupies residues 15-45 (PIMEELLHFHDHTLMIVFLISSLVLYVISLM). Residues 46-59 (LTTKLTHTSTMDAQ) lie on the Mitochondrial matrix side of the membrane. A helical membrane pass occupies residues 60–87 (EVETIWTILPAIILILIALPSLRILYMM). At 88-227 (DEINNPSLTV…YFEKWSASML (140 aa)) the chain is on the mitochondrial intermembrane side. H161, C196, E198, C200, H204, and M207 together coordinate Cu cation. E198 is a binding site for Mg(2+). Y218 is modified (phosphotyrosine).

Belongs to the cytochrome c oxidase subunit 2 family. In terms of assembly, component of the cytochrome c oxidase (complex IV, CIV), a multisubunit enzyme composed of 14 subunits. The complex is composed of a catalytic core of 3 subunits MT-CO1, MT-CO2 and MT-CO3, encoded in the mitochondrial DNA, and 11 supernumerary subunits COX4I, COX5A, COX5B, COX6A, COX6B, COX6C, COX7A, COX7B, COX7C, COX8 and NDUFA4, which are encoded in the nuclear genome. The complex exists as a monomer or a dimer and forms supercomplexes (SCs) in the inner mitochondrial membrane with NADH-ubiquinone oxidoreductase (complex I, CI) and ubiquinol-cytochrome c oxidoreductase (cytochrome b-c1 complex, complex III, CIII), resulting in different assemblies (supercomplex SCI(1)III(2)IV(1) and megacomplex MCI(2)III(2)IV(2)). Found in a complex with TMEM177, COA6, COX18, COX20, SCO1 and SCO2. Interacts with TMEM177 in a COX20-dependent manner. Interacts with COX20. Interacts with COX16. Requires Cu cation as cofactor.

The protein localises to the mitochondrion inner membrane. It carries out the reaction 4 Fe(II)-[cytochrome c] + O2 + 8 H(+)(in) = 4 Fe(III)-[cytochrome c] + 2 H2O + 4 H(+)(out). In terms of biological role, component of the cytochrome c oxidase, the last enzyme in the mitochondrial electron transport chain which drives oxidative phosphorylation. The respiratory chain contains 3 multisubunit complexes succinate dehydrogenase (complex II, CII), ubiquinol-cytochrome c oxidoreductase (cytochrome b-c1 complex, complex III, CIII) and cytochrome c oxidase (complex IV, CIV), that cooperate to transfer electrons derived from NADH and succinate to molecular oxygen, creating an electrochemical gradient over the inner membrane that drives transmembrane transport and the ATP synthase. Cytochrome c oxidase is the component of the respiratory chain that catalyzes the reduction of oxygen to water. Electrons originating from reduced cytochrome c in the intermembrane space (IMS) are transferred via the dinuclear copper A center (CU(A)) of subunit 2 and heme A of subunit 1 to the active site in subunit 1, a binuclear center (BNC) formed by heme A3 and copper B (CU(B)). The BNC reduces molecular oxygen to 2 water molecules using 4 electrons from cytochrome c in the IMS and 4 protons from the mitochondrial matrix. This is Cytochrome c oxidase subunit 2 (MT-CO2) from Rusa unicolor (Sambar).